Here is a 78-residue protein sequence, read N- to C-terminus: Small ribosomal subunit protein bS18B (78 aa).

The interval 1–22 (MPRKPVRKVASTPRPNPLDQNG) is disordered.

It belongs to the bacterial ribosomal protein bS18 family. Part of the 30S ribosomal subunit. Forms a tight heterodimer with protein bS6.

Binds as a heterodimer with protein bS6 to the central domain of the 16S rRNA, where it helps stabilize the platform of the 30S subunit. This Streptomyces avermitilis (strain ATCC 31267 / DSM 46492 / JCM 5070 / NBRC 14893 / NCIMB 12804 / NRRL 8165 / MA-4680) protein is Small ribosomal subunit protein bS18B.